A 276-amino-acid polypeptide reads, in one-letter code: N-acyl homoserine lactonase AiiB (276 aa).

Zn(2+)-binding residues include His-111, His-113, His-116, His-191, Asp-213, and His-259.

It belongs to the metallo-beta-lactamase superfamily. Zn(2+) is required as a cofactor.

It catalyses the reaction an N-acyl-L-homoserine lactone + H2O = an N-acyl-L-homoserine + H(+). The sequence is that of N-acyl homoserine lactonase AiiB from Rhizobium rhizogenes (strain K84 / ATCC BAA-868) (Agrobacterium radiobacter).